A 149-amino-acid polypeptide reads, in one-letter code: MAAKVEPFWKRKTLDRLDAEEWESLCDGCGLCCLQKLEDEEDGSVYYTRIACRLLDLETCRCRDYANRRRSVPDCIQLTPAQAGEFQWLPPTCAYRLLAEGEDLPLWHPLVCGDPQAVHRERISRAGRMLSESAVAEDDWEEHLIFRAG.

This sequence belongs to the UPF0260 family.

The protein is UPF0260 protein Avin_32930 of Azotobacter vinelandii (strain DJ / ATCC BAA-1303).